We begin with the raw amino-acid sequence, 354 residues long: UDP-N-acetylglucosamine--N-acetylmuramyl-(pentapeptide) pyrophosphoryl-undecaprenol N-acetylglucosamine transferase (354 aa).

UDP-N-acetyl-alpha-D-glucosamine is bound by residues 14 to 16 (TGG), Asn126, Arg162, Ser190, Ile243, 262 to 267 (ALTVSE), and Gln287.

The protein belongs to the glycosyltransferase 28 family. MurG subfamily.

The protein resides in the cell inner membrane. It carries out the reaction di-trans,octa-cis-undecaprenyl diphospho-N-acetyl-alpha-D-muramoyl-L-alanyl-D-glutamyl-meso-2,6-diaminopimeloyl-D-alanyl-D-alanine + UDP-N-acetyl-alpha-D-glucosamine = di-trans,octa-cis-undecaprenyl diphospho-[N-acetyl-alpha-D-glucosaminyl-(1-&gt;4)]-N-acetyl-alpha-D-muramoyl-L-alanyl-D-glutamyl-meso-2,6-diaminopimeloyl-D-alanyl-D-alanine + UDP + H(+). It functions in the pathway cell wall biogenesis; peptidoglycan biosynthesis. In terms of biological role, cell wall formation. Catalyzes the transfer of a GlcNAc subunit on undecaprenyl-pyrophosphoryl-MurNAc-pentapeptide (lipid intermediate I) to form undecaprenyl-pyrophosphoryl-MurNAc-(pentapeptide)GlcNAc (lipid intermediate II). This is UDP-N-acetylglucosamine--N-acetylmuramyl-(pentapeptide) pyrophosphoryl-undecaprenol N-acetylglucosamine transferase from Photobacterium profundum (strain SS9).